The chain runs to 194 residues: Probable GTP-binding protein EngB (194 aa).

Residues 22–194 (PLPEVALAGR…AWKAILHAIS (173 aa)) form the EngB-type G domain. Residues 30 to 37 (GRSNVGKS), 57 to 61 (GKTQT), 75 to 78 (DVPG), 142 to 145 (TKCD), and 174 to 176 (FSS) contribute to the GTP site. Residues Ser37 and Thr59 each coordinate Mg(2+).

The protein belongs to the TRAFAC class TrmE-Era-EngA-EngB-Septin-like GTPase superfamily. EngB GTPase family. Mg(2+) is required as a cofactor.

Necessary for normal cell division and for the maintenance of normal septation. This chain is Probable GTP-binding protein EngB, found in Halalkalibacterium halodurans (strain ATCC BAA-125 / DSM 18197 / FERM 7344 / JCM 9153 / C-125) (Bacillus halodurans).